The sequence spans 264 residues: Hydroxyethylthiazole kinase (264 aa).

A substrate-binding site is contributed by Met52. The ATP site is built by Arg127 and Thr173. Position 200 (Gly200) interacts with substrate.

Belongs to the Thz kinase family. It depends on Mg(2+) as a cofactor.

The enzyme catalyses 5-(2-hydroxyethyl)-4-methylthiazole + ATP = 4-methyl-5-(2-phosphooxyethyl)-thiazole + ADP + H(+). It functions in the pathway cofactor biosynthesis; thiamine diphosphate biosynthesis; 4-methyl-5-(2-phosphoethyl)-thiazole from 5-(2-hydroxyethyl)-4-methylthiazole: step 1/1. Its function is as follows. Catalyzes the phosphorylation of the hydroxyl group of 4-methyl-5-beta-hydroxyethylthiazole (THZ). The sequence is that of Hydroxyethylthiazole kinase from Pectobacterium carotovorum subsp. carotovorum (strain PC1).